The chain runs to 429 residues: G2/mitotic-specific cyclin-B1 (429 aa).

The segment at Thr-71–Glu-114 is disordered. Lys-73 carries the post-translational modification N6-acetyllysine. Positions Ala-98–Ser-112 are enriched in basic and acidic residues. Phosphoserine; by CDK1 is present on Ser-122. Residue Ser-124 is modified to Phosphoserine. At Ser-129 the chain carries Phosphoserine; by PLK1. Ser-143 is modified (phosphoserine). 2 interaction with CDK2 regions span residues Glu-165 to Tyr-173 and Tyr-254 to Met-257. Thr-317 is subject to Phosphothreonine.

This sequence belongs to the cyclin family. Cyclin AB subfamily. In terms of assembly, interacts with the CDC2 protein kinase to form a serine/threonine kinase holoenzyme complex also known as maturation promoting factor (MPF). The cyclin subunit imparts substrate specificity to the complex. Binds HEI10. Interacts with catalytically active RALBP1 and CDC2 during mitosis to form an endocytotic complex during interphase. Interacts with CCNF; interaction is required for nuclear localization. Interacts with CDK5RAP3. Interacts with RFPL4A and UBE2A. Interacts with INCA1. Post-translationally, ubiquitinated by the SCF(NIPA) complex during interphase, leading to its destruction. Not ubiquitinated during G2/M phases. In terms of processing, phosphorylated by PLK1 at Ser-129 on centrosomes during prophase: phosphorylation by PLK1 does not cause nuclear import. Phosphorylation at Ser-143 was also reported to be mediated by PLK1 but Ser-129 seems to be the primary phosphorylation site.

Its subcellular location is the cytoplasm. The protein resides in the nucleus. The protein localises to the cytoskeleton. It is found in the microtubule organizing center. It localises to the centrosome. Its function is as follows. Essential for the control of the cell cycle at the G2/M (mitosis) transition. This Mesocricetus auratus (Golden hamster) protein is G2/mitotic-specific cyclin-B1 (CCNB1).